The chain runs to 85 residues: Large ribosomal subunit protein bL27 (85 aa).

The tract at residues M1–G22 is disordered.

Belongs to the bacterial ribosomal protein bL27 family.

In Tolumonas auensis (strain DSM 9187 / NBRC 110442 / TA 4), this protein is Large ribosomal subunit protein bL27.